The following is a 430-amino-acid chain: Probable ribosomal RNA small subunit methyltransferase B (430 aa).

S-adenosyl-L-methionine contacts are provided by residues 246–252 (CAAPGSK), aspartate 270, aspartate 299, and aspartate 318. The active-site Nucleophile is cysteine 371.

The protein belongs to the class I-like SAM-binding methyltransferase superfamily. RsmB/NOP family.

The protein localises to the cytoplasm. It catalyses the reaction cytidine(967) in 16S rRNA + S-adenosyl-L-methionine = 5-methylcytidine(967) in 16S rRNA + S-adenosyl-L-homocysteine + H(+). Functionally, specifically methylates the cytosine at position 967 (m5C967) of 16S rRNA. The sequence is that of Probable ribosomal RNA small subunit methyltransferase B from Coxiella burnetii (strain RSA 493 / Nine Mile phase I).